A 72-amino-acid chain; its full sequence is Translation initiation factor IF-1 (72 aa).

Residues M1–R72 form the S1-like domain.

The protein belongs to the IF-1 family. As to quaternary structure, component of the 30S ribosomal translation pre-initiation complex which assembles on the 30S ribosome in the order IF-2 and IF-3, IF-1 and N-formylmethionyl-tRNA(fMet); mRNA recruitment can occur at any time during PIC assembly.

It localises to the cytoplasm. In terms of biological role, one of the essential components for the initiation of protein synthesis. Stabilizes the binding of IF-2 and IF-3 on the 30S subunit to which N-formylmethionyl-tRNA(fMet) subsequently binds. Helps modulate mRNA selection, yielding the 30S pre-initiation complex (PIC). Upon addition of the 50S ribosomal subunit IF-1, IF-2 and IF-3 are released leaving the mature 70S translation initiation complex. This chain is Translation initiation factor IF-1, found in Buchnera aphidicola subsp. Schizaphis graminum (strain Sg).